A 328-amino-acid polypeptide reads, in one-letter code: Methionyl-tRNA formyltransferase (328 aa).

Residue 110–113 (SLLP) coordinates (6S)-5,6,7,8-tetrahydrofolate.

The protein belongs to the Fmt family.

It carries out the reaction L-methionyl-tRNA(fMet) + (6R)-10-formyltetrahydrofolate = N-formyl-L-methionyl-tRNA(fMet) + (6S)-5,6,7,8-tetrahydrofolate + H(+). Its function is as follows. Attaches a formyl group to the free amino group of methionyl-tRNA(fMet). The formyl group appears to play a dual role in the initiator identity of N-formylmethionyl-tRNA by promoting its recognition by IF2 and preventing the misappropriation of this tRNA by the elongation apparatus. In Prochlorococcus marinus subsp. pastoris (strain CCMP1986 / NIES-2087 / MED4), this protein is Methionyl-tRNA formyltransferase.